The following is a 529-amino-acid chain: Glucocorticoid modulatory element-binding protein 2 (529 aa).

The SAND domain occupies 80–162; the sequence is EEGENLEAEI…RKIMDSGELD (83 aa). Cys-109 contacts Zn(2+). Residues Lys-135, Lys-139, Lys-142, and Arg-153 each coordinate DNA. Lys-154 is covalently cross-linked (Glycyl lysine isopeptide (Lys-Gly) (interchain with G-Cter in SUMO1); alternate). Residue Lys-154 forms a Glycyl lysine isopeptide (Lys-Gly) (interchain with G-Cter in SUMO2); alternate linkage. Zn(2+) contacts are provided by His-166, Cys-170, and Cys-174. The stretch at 244 to 347 forms a coiled coil; sequence LLDEVIQEFQ…HLSNVLMTLT (104 aa). At Ser-372 the chain carries Phosphoserine.

As to quaternary structure, homodimer, and heterodimer of GMEB1 and GMEB2. Interacts with the glucocorticoid receptor (NR3C1). May interact with CREB-binding protein (CBP).

The protein resides in the nucleus. Its subcellular location is the cytoplasm. Its function is as follows. Trans-acting factor that binds to glucocorticoid modulatory elements (GME) present in the TAT (tyrosine aminotransferase) promoter and increases sensitivity to low concentrations of glucocorticoids. Also binds to the transferrin receptor promoter. This is Glucocorticoid modulatory element-binding protein 2 (Gmeb2) from Rattus norvegicus (Rat).